The primary structure comprises 389 residues: Succinate--CoA ligase [ADP-forming] subunit beta (389 aa).

The 228-residue stretch at 9 to 236 (KELFAKHGVP…RDATDPLELK (228 aa)) folds into the ATP-grasp domain. Residues K45, 52–54 (GRG), S94, and E99 contribute to the ATP site. Residues N191 and D205 each contribute to the Mg(2+) site. Substrate is bound by residues N256 and 318–320 (GIT).

This sequence belongs to the succinate/malate CoA ligase beta subunit family. Heterotetramer of two alpha and two beta subunits. Mg(2+) is required as a cofactor.

It catalyses the reaction succinate + ATP + CoA = succinyl-CoA + ADP + phosphate. The catalysed reaction is GTP + succinate + CoA = succinyl-CoA + GDP + phosphate. Its pathway is carbohydrate metabolism; tricarboxylic acid cycle; succinate from succinyl-CoA (ligase route): step 1/1. Succinyl-CoA synthetase functions in the citric acid cycle (TCA), coupling the hydrolysis of succinyl-CoA to the synthesis of either ATP or GTP and thus represents the only step of substrate-level phosphorylation in the TCA. The beta subunit provides nucleotide specificity of the enzyme and binds the substrate succinate, while the binding sites for coenzyme A and phosphate are found in the alpha subunit. The chain is Succinate--CoA ligase [ADP-forming] subunit beta from Rhodococcus erythropolis (strain PR4 / NBRC 100887).